A 1140-amino-acid chain; its full sequence is Calcium-activated potassium channel slo-1 (1140 aa).

The Extracellular portion of the chain corresponds to 1 to 44; it reads MGEIYSPSQSKGFNQPYGYPMNCNLSRVFMEMTEEDRKCLEERK. The chain crosses the membrane as a helical span at residues 45-65; that stretch reads YWCFLLSSITTFCASMILVVI. The Cytoplasmic portion of the chain corresponds to 66 to 139; that stretch reads WRVVTHLCCQ…LISGQSLTGR (74 aa). A helical transmembrane segment spans residues 140–161; sequence FLVLLVFILSIGSLIIYFYDAS. Residues 162–178 lie on the Extracellular side of the membrane; sequence FQNFQVETCIPWQDSPS. Residues 179–199 form a helical membrane-spanning segment; it reads QQIDLGFNIFFLVYFFIRFIA. Residues 200-203 are Cytoplasmic-facing; that stretch reads ASDK. A helical transmembrane segment spans residues 204–224; that stretch reads VWFLLEMYSWIDFFTIPPSFV. At 225–228 the chain is on the extracellular side; the sequence is AIYL. The chain crosses the membrane as a helical; Voltage-sensor span at residues 229 to 249; it reads QRNWLGFRFLRALRLMTVPDI. Over 250-264 the chain is Cytoplasmic; sequence LQYLNILKTSSSIRL. A helical transmembrane segment spans residues 265–285; it reads TQLVTIFVAVCLTGAGLVHLL. Residues 286-299 lie on the Extracellular side of the membrane; that stretch reads ENSGDFFKGFINPH. Residues 300–322 constitute an intramembrane region (pore-forming); sequence RITYADSVYFVLVTMSTVGYGDI. The Selectivity for potassium signature appears at 316–319; the sequence is TVGY. The Extracellular segment spans residues 323–331; sequence YCTTLCGRL. A helical membrane pass occupies residues 332 to 352; it reads FMIFFILFGLAMFASYVPEIA. The Cytoplasmic portion of the chain corresponds to 353 to 1140; sequence DLIGNRQKYG…LEYEPGKRHF (788 aa). One can recognise an RCK N-terminal 1 domain in the interval 371-514; that stretch reads KKHIVVCGHI…DWKRGDDVIC (144 aa). The interval 520-540 is segment S7; the sequence is LGFIAQSCLAPGFSTMMANLF. Residues 578-598 form a segment S8 region; sequence MTFPEAVDLLFNRLGLLLLAI. Positions 797-817 are segment S9; sequence VLNGHVVVCLFADQDSPLIGL. The RCK N-terminal 2 domain maps to 799-953; sequence NGHVVVCLFA…GAKFGTNVPM (155 aa). Residues 955–977 carry the Calcium bowl motif; it reads TELVNDSNVQFLDQDDDDDPDTE. Residues Gln964, Asp967, Asp970, and Asp972 each coordinate Ca(2+). The interval 984–1004 is segment S10; that stretch reads FACGTAFAISVLDSLMSTTYF.

It belongs to the potassium channel family. Calcium-activated (TC 1.A.1.3) subfamily. Slo sub-subfamily. As to quaternary structure, homotetramer; which constitutes the calcium-activated potassium channel. In terms of processing, phosphorylated. As to expression, expressed in synaptic regions of the nervous system including in both the nerve ring and nerve cords, as well as in the body-wall and vulval muscle. Expressed broadly in motor neurons. Forms puncta at presynaptic terminals of neurons, muscle excitation sites, and in the dorsal nerve cord.

It localises to the cell membrane. The protein resides in the synapse. In terms of biological role, potassium channel activated by both membrane depolarization or increase in cytosolic Ca(2+) that mediates export of K(+). Its activation dampens the excitatory events that elevate the cytosolic Ca(2+) concentration and/or depolarize the cell membrane. It therefore contributes to repolarization of the membrane potential. Essential for the regulation of neurotransmitter release at synapses. Regulates longevity and age-associated decline in motor activity in mid-late life, by acting in motor neurons and through daf-16 in the intestine. When clustered in neurons, mediates ethanol-induced suppression of locomotory and egg-laying behaviors. The chain is Calcium-activated potassium channel slo-1 from Caenorhabditis elegans.